The sequence spans 984 residues: Mineralocorticoid receptor (984 aa).

The tract at residues 1-602 (METKGYHSLP…STGSSRPSKI (602 aa)) is modulating. The span at 231 to 243 (QGTPLTCSPNVEN) shows a compositional bias: polar residues. Disordered regions lie at residues 231–329 (QGTP…AAST) and 346–369 (SGTS…EKGA). 5 positions are modified to phosphoserine: Ser-250, Ser-259, Ser-283, Ser-287, and Ser-299. Over residues 259–291 (SPLSSPLSSMKSSISSPPSHCSVKSPVSSPNNV) the composition is skewed to low complexity. Polar residues predominate over residues 292–329 (TLRSSVSSPANINNSRCSVSSPSNTNNRSTLSSPAAST). The segment covering 346–355 (SGTSAGSSTS) has biased composition (low complexity). The Zn(2+) site is built by Cys-603, Cys-606, Cys-620, Cys-623, Cys-639, Cys-645, Cys-655, and Cys-658. NR C4-type zinc fingers lie at residues 603-623 (CLVC…CGSC) and 639-663 (CAGR…LQKC). The segment at residues 603-668 (CLVCGDEASG…RLQKCLQAGM (66 aa)) is a DNA-binding region (nuclear receptor). Residues 669-725 (NLGARKSKKLGKLKGIHEEQPQQQQPPPPPPPPQSPEEGTTYIAPAKEPSVNTALVP) form a hinge region. The disordered stretch occupies residues 684-710 (IHEEQPQQQQPPPPPPPPQSPEEGTTY). Residues 692-703 (QQPPPPPPPPQS) show a composition bias toward pro residues. Residues 726–964 (QLSTISRALT…EFPAMLVEII (239 aa)) form the NR LBD domain. Positions 770 and 776 each coordinate 21-hydroxyprogesterone. Asn-770 and Gln-776 together coordinate aldosterone. Progesterone-binding residues include Asn-770 and Gln-776. The interval 782–785 (KWAK) is important for coactivator binding. 21-hydroxyprogesterone contacts are provided by Arg-817 and Thr-945. Arg-817 and Thr-945 together coordinate aldosterone. Arg-817 and Thr-945 together coordinate progesterone.

This sequence belongs to the nuclear hormone receptor family. NR3 subfamily. In terms of assembly, heteromultimeric cytoplasmic complex with HSP90, HSP70, and FKBP4, in the absence of ligand. After ligand binding, it translocates to the nucleus and binds to DNA as a homodimer and as a heterodimer with NR3C1. Binds the coactivator NCOA2. May interact with HSD11B2 in the absence of ligand. Binds the coactivators NCOA1, TIF1 and NRIP1. In terms of processing, phosphorylated.

The protein resides in the cytoplasm. Its subcellular location is the nucleus. It is found in the endoplasmic reticulum membrane. Its function is as follows. Receptor for both mineralocorticoids (MC) such as aldosterone and glucocorticoids (GC) such as corticosterone or cortisol. Binds to mineralocorticoid response elements (MRE) and transactivates target genes. The effect of MC is to increase ion and water transport and thus raise extracellular fluid volume and blood pressure and lower potassium levels. In Aotus nancymaae (Ma's night monkey), this protein is Mineralocorticoid receptor (NR3C2).